A 362-amino-acid polypeptide reads, in one-letter code: Formyltransferase/hydrolase complex Fhc subunit B (362 aa).

In terms of assembly, octaheteromer. Part of the formyltransferase/hydrolase complex fhc; composed of FhcA, FhcB, FhcC and FhcD.

Its subcellular location is the cytoplasm. Its pathway is one-carbon metabolism; formaldehyde degradation; formate from formaldehyde (H(4)MPT route): step 4/5. In terms of biological role, involved in the transformation of 5-formyl tetrahydromethanopterin (5-formyl-H(4)MPT) to methanofuran (MFR) and formate via the formylmethanofuran (formyl-MFR). The polypeptide is Formyltransferase/hydrolase complex Fhc subunit B (fhcB) (Methylorubrum extorquens (strain ATCC 14718 / DSM 1338 / JCM 2805 / NCIMB 9133 / AM1) (Methylobacterium extorquens)).